Reading from the N-terminus, the 286-residue chain is Ribose-phosphate pyrophosphokinase (286 aa).

Residues 34-36 (DGE) and 91-93 (RQH) each bind ATP. Positions 124 and 161 each coordinate Mg(2+). Lys184 is a catalytic residue. D-ribose 5-phosphate-binding positions include Arg186, Asp210, and 214 to 218 (STGGT).

Belongs to the ribose-phosphate pyrophosphokinase family. Class III (archaeal) subfamily. In terms of assembly, homodimer. Mg(2+) serves as cofactor.

The protein resides in the cytoplasm. It carries out the reaction D-ribose 5-phosphate + ATP = 5-phospho-alpha-D-ribose 1-diphosphate + AMP + H(+). It participates in metabolic intermediate biosynthesis; 5-phospho-alpha-D-ribose 1-diphosphate biosynthesis; 5-phospho-alpha-D-ribose 1-diphosphate from D-ribose 5-phosphate (route I): step 1/1. Functionally, involved in the biosynthesis of the central metabolite phospho-alpha-D-ribosyl-1-pyrophosphate (PRPP) via the transfer of pyrophosphoryl group from ATP to 1-hydroxyl of ribose-5-phosphate (Rib-5-P). This is Ribose-phosphate pyrophosphokinase from Thermoplasma volcanium (strain ATCC 51530 / DSM 4299 / JCM 9571 / NBRC 15438 / GSS1).